Reading from the N-terminus, the 152-residue chain is Probable spermine N(1)-acetyltransferase (152 aa).

One can recognise an N-acetyltransferase domain in the interval 3–152 (INIKAVTDDN…NGEKVMVKEL (150 aa)). Residues 82–84 (FFI), 89–95 (QGKGLGK), and 122–131 (NIHAIRLYQR) contribute to the acetyl-CoA site. The active-site Proton donor is Tyr129.

The protein belongs to the acetyltransferase family.

It carries out the reaction an alkane-alpha,omega-diamine + acetyl-CoA = an N-acetylalkane-alpha,omega-diamine + CoA + H(+). It catalyses the reaction spermine + acetyl-CoA = N(1)-acetylspermine + CoA + H(+). It functions in the pathway amine and polyamine degradation; spermine degradation. Its function is as follows. Probably acetylates spermine to N(1)-acetylspermine. The protein is Probable spermine N(1)-acetyltransferase of Bacillus subtilis subsp. natto (strain BEST195).